A 571-amino-acid polypeptide reads, in one-letter code: Cytochrome P450 monooxygenase g430 (571 aa).

The helical transmembrane segment at 8–28 (GALIWVVTSYILYAIISNFII) threads the bilayer. Heme is bound at residue C471. Residues 552-571 (CPLPAEAKLPKSRKPIGTAS) form a disordered region.

The protein belongs to the cytochrome P450 family. Requires heme as cofactor.

The protein localises to the membrane. It participates in mycotoxin biosynthesis. Functionally, cytochrome P450 monooxygenase; part of the gene cluster that mediates the biosynthesis of 1233A, a natural compound known as an inhibitor of HMG-CoA synthase in the mevalonate pathway and with antibacterial and antifungal activities. The highly reducing polyketide synthase g433 is responsible for the 1233A backbone biosynthesis and the cytochrome P450 monooxygenase g430 catalyzes oxidation of the backbone. This is Cytochrome P450 monooxygenase g430 from Fusarium sp.